The sequence spans 365 residues: tRNA(Met) cytidine acetate ligase (365 aa).

ATP-binding positions include I7–L20, G96, N152, and R175.

The protein belongs to the TmcAL family.

Its subcellular location is the cytoplasm. It carries out the reaction cytidine(34) in elongator tRNA(Met) + acetate + ATP = N(4)-acetylcytidine(34) in elongator tRNA(Met) + AMP + diphosphate. Catalyzes the formation of N(4)-acetylcytidine (ac(4)C) at the wobble position of elongator tRNA(Met), using acetate and ATP as substrates. First activates an acetate ion to form acetyladenylate (Ac-AMP) and then transfers the acetyl group to tRNA to form ac(4)C34. The sequence is that of tRNA(Met) cytidine acetate ligase from Streptococcus pneumoniae (strain JJA).